A 296-amino-acid chain; its full sequence is Ribosomal RNA small subunit methyltransferase H (296 aa).

Residues 38–40, Glu57, Phe88, Asp103, and His110 each bind S-adenosyl-L-methionine; that span reads GAH.

The protein belongs to the methyltransferase superfamily. RsmH family.

The protein localises to the cytoplasm. The catalysed reaction is cytidine(1402) in 16S rRNA + S-adenosyl-L-methionine = N(4)-methylcytidine(1402) in 16S rRNA + S-adenosyl-L-homocysteine + H(+). Its function is as follows. Specifically methylates the N4 position of cytidine in position 1402 (C1402) of 16S rRNA. This is Ribosomal RNA small subunit methyltransferase H from Borreliella afzelii (strain PKo) (Borrelia afzelii).